The following is a 167-amino-acid chain: Gametocyte-specific factor 1 homolog (167 aa).

2 CHHC U11-48K-type zinc fingers span residues 1 to 28 and 34 to 61; these read MVYC…RVIY and LMVC…EDRN. 8 residues coordinate Zn(2+): Cys-4, His-10, His-20, Cys-24, Cys-37, His-43, His-53, and Cys-57. Residues 128-161 are compositionally biased toward basic and acidic residues; that stretch reads EKRRHFGEDYEEEKKPRKAKARADLRPTPYEHRR. The disordered stretch occupies residues 128–167; the sequence is EKRRHFGEDYEEEKKPRKAKARADLRPTPYEHRRPYSRRQ.

It belongs to the UPF0224 (FAM112) family. In terms of assembly, interacts with piwi.

Its subcellular location is the nucleus. Acts via the piwi-interacting RNA (piRNA) pathway which mediates the repression of transposable elements during meiosis by forming complexes composed of piRNAs and piwi proteins and governs the methylation and subsequent repression of transposons. Required for repression of transposons and neighboring genes in ovarian somatic and germline cells. In Drosophila melanogaster (Fruit fly), this protein is Gametocyte-specific factor 1 homolog.